The primary structure comprises 354 residues: Uroporphyrinogen decarboxylase (354 aa).

Residues 27-31 (RQAGR), aspartate 77, tyrosine 154, threonine 209, and histidine 327 contribute to the substrate site.

This sequence belongs to the uroporphyrinogen decarboxylase family. Homodimer.

The protein localises to the cytoplasm. The catalysed reaction is uroporphyrinogen III + 4 H(+) = coproporphyrinogen III + 4 CO2. Its pathway is porphyrin-containing compound metabolism; protoporphyrin-IX biosynthesis; coproporphyrinogen-III from 5-aminolevulinate: step 4/4. In terms of biological role, catalyzes the decarboxylation of four acetate groups of uroporphyrinogen-III to yield coproporphyrinogen-III. In Pseudomonas putida (strain W619), this protein is Uroporphyrinogen decarboxylase.